The following is a 92-amino-acid chain: Large ribosomal subunit protein eL31 (92 aa).

The protein belongs to the eukaryotic ribosomal protein eL31 family.

This chain is Large ribosomal subunit protein eL31, found in Pyrobaculum arsenaticum (strain DSM 13514 / JCM 11321 / PZ6).